The following is a 161-amino-acid chain: Phosphopantetheine adenylyltransferase (161 aa).

Residue Thr-11 participates in substrate binding. Residues 11-12 and His-19 each bind ATP; that span reads TF. Substrate is bound by residues Lys-43, Thr-75, and Arg-89. Residues 90–92, Glu-100, and 125–131 contribute to the ATP site; these read GLR and YSFLSSS.

Belongs to the bacterial CoaD family. In terms of assembly, homohexamer. Mg(2+) serves as cofactor.

The protein resides in the cytoplasm. The catalysed reaction is (R)-4'-phosphopantetheine + ATP + H(+) = 3'-dephospho-CoA + diphosphate. It participates in cofactor biosynthesis; coenzyme A biosynthesis; CoA from (R)-pantothenate: step 4/5. In terms of biological role, reversibly transfers an adenylyl group from ATP to 4'-phosphopantetheine, yielding dephospho-CoA (dPCoA) and pyrophosphate. In Listeria welshimeri serovar 6b (strain ATCC 35897 / DSM 20650 / CCUG 15529 / CIP 8149 / NCTC 11857 / SLCC 5334 / V8), this protein is Phosphopantetheine adenylyltransferase.